A 142-amino-acid polypeptide reads, in one-letter code: Aspartate 1-decarboxylase (142 aa).

Ser-25 functions as the Schiff-base intermediate with substrate; via pyruvic acid in the catalytic mechanism. Residue Ser-25 is modified to Pyruvic acid (Ser). Thr-57 serves as a coordination point for substrate. The active-site Proton donor is Tyr-58. Residue 73–75 participates in substrate binding; it reads GAA.

The protein belongs to the PanD family. In terms of assembly, heterooctamer of four alpha and four beta subunits. The cofactor is pyruvate. Is synthesized initially as an inactive proenzyme, which is activated by self-cleavage at a specific serine bond to produce a beta-subunit with a hydroxyl group at its C-terminus and an alpha-subunit with a pyruvoyl group at its N-terminus.

The protein localises to the cytoplasm. The enzyme catalyses L-aspartate + H(+) = beta-alanine + CO2. Its pathway is cofactor biosynthesis; (R)-pantothenate biosynthesis; beta-alanine from L-aspartate: step 1/1. Its function is as follows. Catalyzes the pyruvoyl-dependent decarboxylation of aspartate to produce beta-alanine. This is Aspartate 1-decarboxylase from Arthrobacter sp. (strain FB24).